The following is a 408-amino-acid chain: Neutral cholesterol ester hydrolase 1 (408 aa).

Residues 1 to 4 (MRSS) lie on the Cytoplasmic side of the membrane. The helical; Signal-anchor for type II membrane protein transmembrane segment at 5 to 25 (CVLLAALLALAAYYVYIPLPS) threads the bilayer. Residues 26–408 (AVSDPWKLML…SYIKWLDQNL (383 aa)) lie on the Lumenal side of the membrane. Positions 113–115 (HGG) match the Involved in the stabilization of the negatively charged intermediate by the formation of the oxyanion hole motif. S191 is an active-site residue. N270 carries N-linked (GlcNAc...) asparagine glycosylation. The active site involves D348. Residue N367 is glycosylated (N-linked (GlcNAc...) asparagine). The active site involves H378. A glycan (N-linked (GlcNAc...) asparagine) is linked at N389.

It belongs to the 'GDXG' lipolytic enzyme family. In terms of processing, N-glycosylated. In terms of tissue distribution, present in brain, heart, kidney, lung, spinal cord and testis but not liver (at protein level). Expressed in peritoneal macrophages and kidney.

The protein resides in the cell membrane. It is found in the microsome. The catalysed reaction is a 1-O-alkyl-2-acetyl-sn-glycerol + H2O = a 1-O-alkyl-sn-glycerol + acetate + H(+). The enzyme catalyses 1-O-hexadecyl-2-acetyl-sn-glycerol + H2O = 1-O-hexadecyl-sn-glycerol + acetate + H(+). It carries out the reaction a cholesterol ester + H2O = cholesterol + a fatty acid + H(+). It catalyses the reaction cholesteryl (9Z-octadecenoate) + H2O = cholesterol + (9Z)-octadecenoate + H(+). Inhibited by bulky trifluoromethyl ketones. In terms of biological role, hydrolyzes 2-acetyl monoalkylglycerol ether (1-O-alkyl-2-acetyl-sn-glycerol), the penultimate precursor of the pathway for de novo synthesis of platelet-activating factor. May be responsible for the hydrolysis of cholesterol esters (such as cholesteryl (9Z-octadecenoate)) in macrophages. Also involved in organ detoxification by hydrolyzing exogenous organophosphorus compounds. The polypeptide is Neutral cholesterol ester hydrolase 1 (Nceh1) (Mus musculus (Mouse)).